The primary structure comprises 60 residues: Large ribosomal subunit protein bL32 (60 aa).

The disordered stretch occupies residues 1-27; sequence MAVPRNRLSNARKNSKRAHHAKKPKSL. Over residues 13–25 the composition is skewed to basic residues; the sequence is KNSKRAHHAKKPK.

This sequence belongs to the bacterial ribosomal protein bL32 family.

The chain is Large ribosomal subunit protein bL32 from Protochlamydia amoebophila (strain UWE25).